The chain runs to 181 residues: Oligoribonuclease (181 aa).

The 164-residue stretch at 8–171 folds into the Exonuclease domain; the sequence is LIWIDLEMTG…DDIRESVGEL (164 aa). Tyrosine 129 is an active-site residue.

It belongs to the oligoribonuclease family.

The protein resides in the cytoplasm. 3'-to-5' exoribonuclease specific for small oligoribonucleotides. The polypeptide is Oligoribonuclease (Serratia proteamaculans (strain 568)).